Here is a 500-residue protein sequence, read N- to C-terminus: Inner membrane transporter YjeM (500 aa).

The Cytoplasmic segment spans residues 1-7; sequence MPHTIKK. Residues 8 to 28 form a helical membrane-spanning segment; it reads MSLIGLILMIFTSVFGFANSP. At 29 to 37 the chain is on the periplasmic side; it reads SAYYLMGYS. Residues 38-58 form a helical membrane-spanning segment; sequence AIPFYIFSALLFFIPFALMMA. Topologically, residues 59 to 82 are cytoplasmic; it reads EMGAAYRKEEGGIYSWMNNSVGPR. A helical transmembrane segment spans residues 83–103; it reads FAFIGTFMWFSSYIIWMVSTS. Residues 104 to 132 lie on the Periplasmic side of the membrane; that stretch reads AKVWVPFSTFLYGSDMTQHWRIAGLEPTQ. Residues 133 to 153 form a helical membrane-spanning segment; sequence VVGLLAVAWMILVTVVASKGI. Topologically, residues 154–163 are cytoplasmic; it reads NKIARITAVG. Residues 164 to 184 traverse the membrane as a helical segment; it reads GIAVMCLNLVLLLVSITILLL. At 185 to 209 the chain is on the periplasmic side; the sequence is NGGHFAQDINFLASPNPGYQSGLAM. Residues 210–230 traverse the membrane as a helical segment; it reads LSFVVFAIFAYGGIEAVGGLV. At 231-243 the chain is on the cytoplasmic side; that stretch reads DKTENPEKNFAKG. A helical transmembrane segment spans residues 244–264; the sequence is IVFAAIVISIGYSLAIFLWGV. Over 265 to 319 the chain is Periplasmic; it reads STNWQQVLSNGSVNLGNITYVLMKSLGMTLGNALHLSPEASLSLGVWFARITGLS. A helical membrane pass occupies residues 320–340; that stretch reads MFLAYTGAFFTLCYSPLKAII. Residues 341–369 are Cytoplasmic-facing; that stretch reads QGTPKALWPEPMTRLNAMGMPSIAMWMQC. Residues 370–390 traverse the membrane as a helical segment; it reads GLVTVFILLVSFGGGTASAFF. At 391–394 the chain is on the periplasmic side; that stretch reads NKLT. The helical transmembrane segment at 395-415 threads the bilayer; that stretch reads LMANVSMTLPYLFLALAFPFF. Residues 416 to 433 lie on the Cytoplasmic side of the membrane; sequence KARQDLDRPFVIFKTHLS. A helical transmembrane segment spans residues 434 to 454; it reads AMIATVVVVLVVTFANVFTII. The Periplasmic portion of the chain corresponds to 455 to 462; sequence QPVVEAGD. The chain crosses the membrane as a helical span at residues 463 to 483; the sequence is WDSTLWMIGGPVFFSLLAMAI. Residues 484–500 lie on the Cytoplasmic side of the membrane; that stretch reads YQNYCSRVAKNPQWAVE.

Belongs to the amino acid-polyamine-organocation (APC) superfamily.

It localises to the cell inner membrane. This is Inner membrane transporter YjeM (yjeM) from Escherichia coli (strain K12).